Consider the following 130-residue polypeptide: Phosphoribosyl-ATP pyrophosphatase (130 aa).

Belongs to the PRA-PH family.

The protein resides in the cytoplasm. The enzyme catalyses 1-(5-phospho-beta-D-ribosyl)-ATP + H2O = 1-(5-phospho-beta-D-ribosyl)-5'-AMP + diphosphate + H(+). It participates in amino-acid biosynthesis; L-histidine biosynthesis; L-histidine from 5-phospho-alpha-D-ribose 1-diphosphate: step 2/9. This is Phosphoribosyl-ATP pyrophosphatase from Albidiferax ferrireducens (strain ATCC BAA-621 / DSM 15236 / T118) (Rhodoferax ferrireducens).